Here is a 483-residue protein sequence, read N- to C-terminus: Malonate-semialdehyde dehydrogenase 2 (483 aa).

Residues Phe-152, Lys-176, Glu-179, Arg-180, and Ser-229 each contribute to the NAD(+) site. Cys-284 (nucleophile) is an active-site residue. An NAD(+)-binding site is contributed by Glu-384.

Belongs to the aldehyde dehydrogenase family. IolA subfamily. As to quaternary structure, homotetramer.

It carries out the reaction 3-oxopropanoate + NAD(+) + CoA + H2O = hydrogencarbonate + acetyl-CoA + NADH + H(+). The catalysed reaction is 2-methyl-3-oxopropanoate + NAD(+) + CoA + H2O = propanoyl-CoA + hydrogencarbonate + NADH + H(+). The protein operates within polyol metabolism; myo-inositol degradation into acetyl-CoA; acetyl-CoA from myo-inositol: step 7/7. Catalyzes the oxidation of malonate semialdehyde (MSA) and methylmalonate semialdehyde (MMSA) into acetyl-CoA and propanoyl-CoA, respectively. Is involved in a myo-inositol catabolic pathway. Bicarbonate, and not CO2, is the end-product of the enzymatic reaction. This Bacillus mycoides (strain KBAB4) (Bacillus weihenstephanensis) protein is Malonate-semialdehyde dehydrogenase 2.